Consider the following 208-residue polypeptide: Uracil phosphoribosyltransferase (208 aa).

5-phospho-alpha-D-ribose 1-diphosphate is bound by residues Arg-78, Arg-103, and 130 to 138 (DPMLATGGS). Uracil is bound by residues Ile-193 and 198-200 (GDA). A 5-phospho-alpha-D-ribose 1-diphosphate-binding site is contributed by Asp-199.

Belongs to the UPRTase family. Mg(2+) is required as a cofactor.

It carries out the reaction UMP + diphosphate = 5-phospho-alpha-D-ribose 1-diphosphate + uracil. Its pathway is pyrimidine metabolism; UMP biosynthesis via salvage pathway; UMP from uracil: step 1/1. Its activity is regulated as follows. Allosterically activated by GTP. Catalyzes the conversion of uracil and 5-phospho-alpha-D-ribose 1-diphosphate (PRPP) to UMP and diphosphate. This chain is Uracil phosphoribosyltransferase, found in Yersinia pestis.